We begin with the raw amino-acid sequence, 456 residues long: F-box/FBD/LRR-repeat protein At1g13780 (456 aa).

An F-box domain is found at 9 to 55; that stretch reads FDRISELPESLISQILLHLPTKASVKTSVLSTRWKNLWLNVPGLDLN. LRR repeat units follow at residues 197–220, 243–266, 302–325, and 355–379; these read LEELIYLHDDKLVVTRVRSRSLKR, APGLEYMSLKADHFDRIVVKNLTS, ISSVRHMVISHNTVKALDLYSKVG, and FPNLKHLILETECPVEVMEKFELVN. The 53-residue stretch at 372–424 folds into the FBD domain; sequence MEKFELVNVPRCFVSTLEHVEIKGLFDWGEQDMKIASYFLENSAVLKKLILSF.

The chain is F-box/FBD/LRR-repeat protein At1g13780 from Arabidopsis thaliana (Mouse-ear cress).